Reading from the N-terminus, the 348-residue chain is Phosphate acyltransferase (348 aa).

This sequence belongs to the PlsX family. Homodimer. Probably interacts with PlsY.

Its subcellular location is the cytoplasm. The catalysed reaction is a fatty acyl-[ACP] + phosphate = an acyl phosphate + holo-[ACP]. It functions in the pathway lipid metabolism; phospholipid metabolism. Catalyzes the reversible formation of acyl-phosphate (acyl-PO(4)) from acyl-[acyl-carrier-protein] (acyl-ACP). This enzyme utilizes acyl-ACP as fatty acyl donor, but not acyl-CoA. The chain is Phosphate acyltransferase from Francisella philomiragia subsp. philomiragia (strain ATCC 25017 / CCUG 19701 / FSC 153 / O#319-036).